A 62-amino-acid chain; its full sequence is Large ribosomal subunit protein bL28 (62 aa).

Belongs to the bacterial ribosomal protein bL28 family.

The polypeptide is Large ribosomal subunit protein bL28 (Wolinella succinogenes (strain ATCC 29543 / DSM 1740 / CCUG 13145 / JCM 31913 / LMG 7466 / NCTC 11488 / FDC 602W) (Vibrio succinogenes)).